A 115-amino-acid chain; its full sequence is Large ribosomal subunit protein bL19 (115 aa).

This sequence belongs to the bacterial ribosomal protein bL19 family.

Functionally, this protein is located at the 30S-50S ribosomal subunit interface and may play a role in the structure and function of the aminoacyl-tRNA binding site. This chain is Large ribosomal subunit protein bL19, found in Streptococcus suis (strain 98HAH33).